Reading from the N-terminus, the 945-residue chain is Argonaute protein wago-1 (945 aa).

The segment covering methionine 1 to alanine 20 has biased composition (pro residues). The segment at methionine 1–serine 41 is disordered. One can recognise a PAZ domain in the interval threonine 322–arginine 432. Residues valine 636–lysine 899 form the Piwi domain.

It belongs to the Argonaute family. WAGO subfamily. Interacts with rde-12. Interacts with znfx-1. In terms of tissue distribution, enriched in sperm and oocytes.

The protein resides in the cytoplasmic granule. Functionally, argonaute protein which is involved in the endogenous small interfering RNA (endo-siRNA) pathway. Interacts with secondary 22G-RNAs, which are RNA-dependent RNA polymerase-derived endo-siRNAs, typically 22 nucleotides in length with a 5'guanosine residue. In the germline, functions in a genome surveillance system to silence transposons and aberrant transcripts. The sequence is that of Argonaute protein wago-1 from Caenorhabditis elegans.